The chain runs to 483 residues: Glycogen synthase (483 aa).

Lys15 contacts ADP-alpha-D-glucose.

It belongs to the glycosyltransferase 1 family. Bacterial/plant glycogen synthase subfamily.

The catalysed reaction is [(1-&gt;4)-alpha-D-glucosyl](n) + ADP-alpha-D-glucose = [(1-&gt;4)-alpha-D-glucosyl](n+1) + ADP + H(+). It functions in the pathway glycan biosynthesis; glycogen biosynthesis. In terms of biological role, synthesizes alpha-1,4-glucan chains using ADP-glucose. This Thioalkalivibrio sulfidiphilus (strain HL-EbGR7) protein is Glycogen synthase.